The primary structure comprises 483 residues: Glutamyl-tRNA(Gln) amidotransferase subunit A (483 aa).

Active-site charge relay system residues include Lys76 and Ser151. The active-site Acyl-ester intermediate is the Ser175.

The protein belongs to the amidase family. GatA subfamily. In terms of assembly, heterotrimer of A, B and C subunits.

The catalysed reaction is L-glutamyl-tRNA(Gln) + L-glutamine + ATP + H2O = L-glutaminyl-tRNA(Gln) + L-glutamate + ADP + phosphate + H(+). In terms of biological role, allows the formation of correctly charged Gln-tRNA(Gln) through the transamidation of misacylated Glu-tRNA(Gln) in organisms which lack glutaminyl-tRNA synthetase. The reaction takes place in the presence of glutamine and ATP through an activated gamma-phospho-Glu-tRNA(Gln). The chain is Glutamyl-tRNA(Gln) amidotransferase subunit A from Chromobacterium violaceum (strain ATCC 12472 / DSM 30191 / JCM 1249 / CCUG 213 / NBRC 12614 / NCIMB 9131 / NCTC 9757 / MK).